The sequence spans 226 residues: Thioredoxin domain-containing protein 9 (226 aa).

The region spanning 52 to 180 (LEALKKAQQQ…TTETLEWRLG (129 aa)) is the Thioredoxin domain. A phosphoserine mark is found at Ser188, Ser221, and Ser223.

As to quaternary structure, forms ternary complexes with the chaperonin TCP1 complex, spanning the cylindrical chaperonin cavity and contacting at least 2 subunits.

It localises to the cytoplasm. It is found in the nucleus. Its subcellular location is the cytoskeleton. The protein resides in the microtubule organizing center. The protein localises to the centrosome. It localises to the midbody. Its function is as follows. Significantly diminishes the chaperonin TCP1 complex ATPase activity, thus negatively impacts protein folding, including that of actin or tubulin. This Bos taurus (Bovine) protein is Thioredoxin domain-containing protein 9 (TXNDC9).